Here is a 373-residue protein sequence, read N- to C-terminus: Chaperone protein DnaJ (373 aa).

Residues 5–70 (DYYELLEVDR…EKRALYDQYG (66 aa)) enclose the J domain. The CR-type zinc-finger motif lies at 134–211 (GTQKEVHYSF…CSGKGYRIEK (78 aa)). Zn(2+) contacts are provided by C147, C150, C163, C166, C185, C188, C199, and C202. 4 CXXCXGXG motif repeats span residues 147–154 (CSACKGTG), 163–170 (CPECHGRG), 185–192 (CPRCHGQG), and 199–206 (CEECSGKG).

The protein belongs to the DnaJ family. In terms of assembly, homodimer. Requires Zn(2+) as cofactor.

The protein localises to the cytoplasm. Functionally, participates actively in the response to hyperosmotic and heat shock by preventing the aggregation of stress-denatured proteins and by disaggregating proteins, also in an autonomous, DnaK-independent fashion. Unfolded proteins bind initially to DnaJ; upon interaction with the DnaJ-bound protein, DnaK hydrolyzes its bound ATP, resulting in the formation of a stable complex. GrpE releases ADP from DnaK; ATP binding to DnaK triggers the release of the substrate protein, thus completing the reaction cycle. Several rounds of ATP-dependent interactions between DnaJ, DnaK and GrpE are required for fully efficient folding. Also involved, together with DnaK and GrpE, in the DNA replication of plasmids through activation of initiation proteins. This Nitratiruptor sp. (strain SB155-2) protein is Chaperone protein DnaJ.